A 542-amino-acid chain; its full sequence is Chaperonin GroEL (542 aa).

Residues 29-32, lysine 50, 86-90, glycine 414, 477-479, and aspartate 493 each bind ATP; these read TMGP, DGTTT, and NAA.

Belongs to the chaperonin (HSP60) family. As to quaternary structure, forms a cylinder of 14 subunits composed of two heptameric rings stacked back-to-back. Interacts with the co-chaperonin GroES.

It is found in the cytoplasm. It catalyses the reaction ATP + H2O + a folded polypeptide = ADP + phosphate + an unfolded polypeptide.. In terms of biological role, together with its co-chaperonin GroES, plays an essential role in assisting protein folding. The GroEL-GroES system forms a nano-cage that allows encapsulation of the non-native substrate proteins and provides a physical environment optimized to promote and accelerate protein folding. The polypeptide is Chaperonin GroEL (Sulfurimonas denitrificans (strain ATCC 33889 / DSM 1251) (Thiomicrospira denitrificans (strain ATCC 33889 / DSM 1251))).